Consider the following 146-residue polypeptide: ATP synthase epsilon chain (146 aa).

The tract at residues 103-122 (SAKKRAEQHMQEAKEKHNER) is disordered.

It belongs to the ATPase epsilon chain family. In terms of assembly, F-type ATPases have 2 components, CF(1) - the catalytic core - and CF(0) - the membrane proton channel. CF(1) has five subunits: alpha(3), beta(3), gamma(1), delta(1), epsilon(1). CF(0) has three main subunits: a, b and c.

The protein resides in the cell membrane. Its function is as follows. Produces ATP from ADP in the presence of a proton gradient across the membrane. The sequence is that of ATP synthase epsilon chain from Lactobacillus johnsonii (strain CNCM I-12250 / La1 / NCC 533).